Reading from the N-terminus, the 629-residue chain is Kelch-like protein 13 (629 aa).

A BTB domain is found at 66 to 135; that stretch reads CDVTLVPGDG…IYTAKLSLNM (70 aa). One can recognise a BACK domain in the interval 170–271; sequence CVEVGRIANT…TPQDLINYVQ (102 aa). 6 Kelch repeats span residues 315–363, 364–415, 416–462, 464–509, 511–561, and 562–610; these read HLVT…VIGN, FLYV…ALKG, HLYA…VYGG, MYIS…TVGD, LYVI…VFEN, and KIYV…TLTV.

Component of the BCR(KLHL9-KLHL13) E3 ubiquitin ligase complex, at least composed of CUL3, KLHL9, KLHL13 and RBX1. Interacts with AURKB.

The protein operates within protein modification; protein ubiquitination. Its function is as follows. Substrate-specific adapter of a BCR (BTB-CUL3-RBX1) E3 ubiquitin-protein ligase complex required for mitotic progression and cytokinesis. The BCR(KLHL9-KLHL13) E3 ubiquitin ligase complex mediates the ubiquitination of AURKB and controls the dynamic behavior of AURKB on mitotic chromosomes and thereby coordinates faithful mitotic progression and completion of cytokinesis. This is Kelch-like protein 13 (KLHL13) from Gallus gallus (Chicken).